Reading from the N-terminus, the 273-residue chain is Dermonecrotic toxin SdSicTox-betaIIB1aiii (273 aa).

His-4 is a catalytic residue. Residues Glu-24 and Asp-26 each contribute to the Mg(2+) site. Residue His-40 is the Nucleophile of the active site. 2 disulfides stabilise this stretch: Cys-44–Cys-50 and Cys-46–Cys-189. Asp-84 serves as a coordination point for Mg(2+).

It belongs to the arthropod phospholipase D family. Class II subfamily. Requires Mg(2+) as cofactor. In terms of tissue distribution, expressed by the venom gland.

The protein localises to the secreted. The enzyme catalyses an N-(acyl)-sphingosylphosphocholine = an N-(acyl)-sphingosyl-1,3-cyclic phosphate + choline. The catalysed reaction is an N-(acyl)-sphingosylphosphoethanolamine = an N-(acyl)-sphingosyl-1,3-cyclic phosphate + ethanolamine. It carries out the reaction a 1-acyl-sn-glycero-3-phosphocholine = a 1-acyl-sn-glycero-2,3-cyclic phosphate + choline. It catalyses the reaction a 1-acyl-sn-glycero-3-phosphoethanolamine = a 1-acyl-sn-glycero-2,3-cyclic phosphate + ethanolamine. Its function is as follows. Dermonecrotic toxins cleave the phosphodiester linkage between the phosphate and headgroup of certain phospholipids (sphingolipid and lysolipid substrates), forming an alcohol (often choline) and a cyclic phosphate. This toxin acts on sphingomyelin (SM). It may also act on ceramide phosphoethanolamine (CPE), lysophosphatidylcholine (LPC) and lysophosphatidylethanolamine (LPE), but not on lysophosphatidylserine (LPS), and lysophosphatidylglycerol (LPG). It acts by transphosphatidylation, releasing exclusively cyclic phosphate products as second products. Induces dermonecrosis, hemolysis, increased vascular permeability, edema, inflammatory response, and platelet aggregation. The polypeptide is Dermonecrotic toxin SdSicTox-betaIIB1aiii (Sicarius cf. damarensis (strain GJB-2008) (Six-eyed sand spider)).